The following is a 347-amino-acid chain: Sesquiterpene synthase M422DRAFT_47084 (347 aa).

Residues D93, N228, S232, and E236 each contribute to the Mg(2+) site. The DDXXD motif signature appears at 93–97 (DEYTD). (2E,6E)-farnesyl diphosphate-binding residues include R318 and Y319.

Belongs to the terpene synthase family. It depends on Mg(2+) as a cofactor.

The enzyme catalyses (2E,6E)-farnesyl diphosphate = viridiflorene + diphosphate. Terpene cyclase that catalyzes the cyclization of farnesyl diphosphate (FPP) to viridiflorene and viridiflorol. The polypeptide is Sesquiterpene synthase M422DRAFT_47084 (Sphaerobolus stellatus (strain SS14)).